The chain runs to 101 residues: Urease subunit beta 1 (101 aa).

The protein belongs to the urease beta subunit family. Heterotrimer of UreA (gamma), UreB (beta) and UreC (alpha) subunits. Three heterotrimers associate to form the active enzyme.

The protein localises to the cytoplasm. It carries out the reaction urea + 2 H2O + H(+) = hydrogencarbonate + 2 NH4(+). It functions in the pathway nitrogen metabolism; urea degradation; CO(2) and NH(3) from urea (urease route): step 1/1. Disruption of the ure1 gene cluster suggests that it protects brucellae during their passage through the stomach. The major route of infection in human brucellosis is oral. This Brucella abortus (strain 2308) protein is Urease subunit beta 1.